The primary structure comprises 265 residues: Glutamate racemase (265 aa).

Substrate-binding positions include 7 to 8 and 39 to 40; these read DS and YG. C70 acts as the Proton donor/acceptor in catalysis. Residue 71–72 participates in substrate binding; sequence NT. The active-site Proton donor/acceptor is C182. Position 183 to 184 (183 to 184) interacts with substrate; that stretch reads TH.

This sequence belongs to the aspartate/glutamate racemases family.

The catalysed reaction is L-glutamate = D-glutamate. Its pathway is cell wall biogenesis; peptidoglycan biosynthesis. Provides the (R)-glutamate required for cell wall biosynthesis. The protein is Glutamate racemase of Lachnospira eligens (strain ATCC 27750 / DSM 3376 / VPI C15-48 / C15-B4) (Eubacterium eligens).